The primary structure comprises 125 residues: TSSK6-activating co-chaperone protein (125 aa).

The tract at residues 1-22 (MEQLPSHPTNRRAKEEGNAVPL) is disordered.

The protein belongs to the TSACC family. As to quaternary structure, interacts with HSP70. Associates with HSP90. Interacts with TSSK6; this interaction is direct and recruits TSACC to HSP90.

Functionally, co-chaperone that facilitates HSP-mediated activation of TSSK6. The protein is TSSK6-activating co-chaperone protein (TSACC) of Bos taurus (Bovine).